The chain runs to 461 residues: Glycogen synthase (461 aa).

Lysine 15 contacts ADP-alpha-D-glucose.

This sequence belongs to the glycosyltransferase 1 family. Bacterial/plant glycogen synthase subfamily.

It carries out the reaction [(1-&gt;4)-alpha-D-glucosyl](n) + ADP-alpha-D-glucose = [(1-&gt;4)-alpha-D-glucosyl](n+1) + ADP + H(+). Its pathway is glycan biosynthesis; glycogen biosynthesis. In terms of biological role, synthesizes alpha-1,4-glucan chains using ADP-glucose. The sequence is that of Glycogen synthase from Fusobacterium nucleatum subsp. nucleatum (strain ATCC 25586 / DSM 15643 / BCRC 10681 / CIP 101130 / JCM 8532 / KCTC 2640 / LMG 13131 / VPI 4355).